Reading from the N-terminus, the 656-residue chain is Nuclear pore complex protein Nup85 (656 aa).

The residue at position 1 (M1) is an N-acetylmethionine. K92 bears the N6-acetyllysine mark. Residue S223 is modified to Phosphoserine.

This sequence belongs to the nucleoporin Nup85 family. In terms of assembly, component of the nuclear pore complex (NPC). Component of the NPC Nup107-160 subcomplex, consisting of at least NUP107, NUP98/Nup96, NUP160, NUP133, NUP85, NUP37, NUP43 and SEC13. Interacts with NUP160, NUP133 and SEC13. Interacts with NUP37, NUP107 and NUP43. Interacts with CCR2.

The protein resides in the nucleus. It localises to the nuclear pore complex. The protein localises to the chromosome. Its subcellular location is the centromere. It is found in the kinetochore. The protein resides in the cytoplasm. It localises to the cytoskeleton. The protein localises to the spindle. Its subcellular location is the nucleus membrane. Functionally, essential component of the nuclear pore complex (NPC) that seems to be required for NPC assembly and maintenance. As part of the NPC Nup107-160 subcomplex plays a role in RNA export and in tethering NUP96/Nup98 and NUP153 to the nucleus. The Nup107-160 complex seems to be required for spindle assembly during mitosis. NUP85 is required for membrane clustering of CCL2-activated CCR2. Seems to be involved in CCR2-mediated chemotaxis of monocytes and may link activated CCR2 to the phosphatidyl-inositol 3-kinase-Rac-lammellipodium protrusion cascade. Involved in nephrogenesis. This Homo sapiens (Human) protein is Nuclear pore complex protein Nup85 (NUP85).